A 60-amino-acid polypeptide reads, in one-letter code: MAAPKRKKSKAKTAMRKAQWMRKLTVPGLSLCPECGQPKTPHRVCPHCGYYKDKEVVEVV.

This sequence belongs to the bacterial ribosomal protein bL32 family.

This is Large ribosomal subunit protein bL32 from Persephonella marina (strain DSM 14350 / EX-H1).